Reading from the N-terminus, the 254-residue chain is 4-hydroxy-tetrahydrodipicolinate reductase (254 aa).

NAD(+) is bound at residue 7 to 12 (GASGRI). Residue arginine 35 coordinates NADP(+). Residues 91 to 93 (GTT) and 115 to 118 (AHNM) contribute to the NAD(+) site. Residue histidine 147 is the Proton donor/acceptor of the active site. Histidine 148 is a (S)-2,3,4,5-tetrahydrodipicolinate binding site. Residue lysine 151 is the Proton donor of the active site. 157 to 158 (GT) is a binding site for (S)-2,3,4,5-tetrahydrodipicolinate.

Belongs to the DapB family.

It localises to the cytoplasm. It catalyses the reaction (S)-2,3,4,5-tetrahydrodipicolinate + NAD(+) + H2O = (2S,4S)-4-hydroxy-2,3,4,5-tetrahydrodipicolinate + NADH + H(+). The catalysed reaction is (S)-2,3,4,5-tetrahydrodipicolinate + NADP(+) + H2O = (2S,4S)-4-hydroxy-2,3,4,5-tetrahydrodipicolinate + NADPH + H(+). The protein operates within amino-acid biosynthesis; L-lysine biosynthesis via DAP pathway; (S)-tetrahydrodipicolinate from L-aspartate: step 4/4. Catalyzes the conversion of 4-hydroxy-tetrahydrodipicolinate (HTPA) to tetrahydrodipicolinate. The chain is 4-hydroxy-tetrahydrodipicolinate reductase from Helicobacter pylori (strain HPAG1).